The sequence spans 120 residues: Large ribosomal subunit protein bL17 (120 aa).

This sequence belongs to the bacterial ribosomal protein bL17 family. Part of the 50S ribosomal subunit. Contacts protein L32.

The protein is Large ribosomal subunit protein bL17 of Bacillus velezensis (strain DSM 23117 / BGSC 10A6 / LMG 26770 / FZB42) (Bacillus amyloliquefaciens subsp. plantarum).